A 440-amino-acid chain; its full sequence is Cell division protein FtsA (440 aa).

The protein belongs to the FtsA/MreB family. Self-interacts. Interacts with FtsZ.

It localises to the cell membrane. Cell division protein that is involved in the assembly of the Z ring. May serve as a membrane anchor for the Z ring. The chain is Cell division protein FtsA from Enterococcus faecalis (strain ATCC 700802 / V583).